The chain runs to 39 residues: Photosystem II reaction center protein J (39 aa).

A helical membrane pass occupies residues isoleucine 7–phenylalanine 27.

This sequence belongs to the PsbJ family. As to quaternary structure, PSII is composed of 1 copy each of membrane proteins PsbA, PsbB, PsbC, PsbD, PsbE, PsbF, PsbH, PsbI, PsbJ, PsbK, PsbL, PsbM, PsbT, PsbX, PsbY, PsbZ, Psb30/Ycf12, at least 3 peripheral proteins of the oxygen-evolving complex and a large number of cofactors. It forms dimeric complexes.

The protein localises to the plastid. The protein resides in the chloroplast thylakoid membrane. Its function is as follows. One of the components of the core complex of photosystem II (PSII). PSII is a light-driven water:plastoquinone oxidoreductase that uses light energy to abstract electrons from H(2)O, generating O(2) and a proton gradient subsequently used for ATP formation. It consists of a core antenna complex that captures photons, and an electron transfer chain that converts photonic excitation into a charge separation. In Trieres chinensis (Marine centric diatom), this protein is Photosystem II reaction center protein J.